The following is a 1071-amino-acid chain: DNA-directed RNA polymerase subunit beta (1071 aa).

The protein belongs to the RNA polymerase beta chain family. In terms of assembly, in plastids the minimal PEP RNA polymerase catalytic core is composed of four subunits: alpha, beta, beta', and beta''. When a (nuclear-encoded) sigma factor is associated with the core the holoenzyme is formed, which can initiate transcription.

Its subcellular location is the plastid. It localises to the chloroplast. The enzyme catalyses RNA(n) + a ribonucleoside 5'-triphosphate = RNA(n+1) + diphosphate. In terms of biological role, DNA-dependent RNA polymerase catalyzes the transcription of DNA into RNA using the four ribonucleoside triphosphates as substrates. The chain is DNA-directed RNA polymerase subunit beta from Drimys granadensis.